Reading from the N-terminus, the 602-residue chain is Elongation factor 4 (602 aa).

Residues 7–188 (ENIRNFSIIA…AIIDLVPPPK (182 aa)) form the tr-type G domain. Residues 19–24 (DHGKST) and 135–138 (NKID) contribute to the GTP site.

It belongs to the TRAFAC class translation factor GTPase superfamily. Classic translation factor GTPase family. LepA subfamily.

It is found in the cell inner membrane. The catalysed reaction is GTP + H2O = GDP + phosphate + H(+). Its function is as follows. Required for accurate and efficient protein synthesis under certain stress conditions. May act as a fidelity factor of the translation reaction, by catalyzing a one-codon backward translocation of tRNAs on improperly translocated ribosomes. Back-translocation proceeds from a post-translocation (POST) complex to a pre-translocation (PRE) complex, thus giving elongation factor G a second chance to translocate the tRNAs correctly. Binds to ribosomes in a GTP-dependent manner. This Chlamydia pneumoniae (Chlamydophila pneumoniae) protein is Elongation factor 4.